A 260-amino-acid polypeptide reads, in one-letter code: Kallikrein-8 (260 aa).

The N-terminal stretch at 1–28 (MGRPPPCAIQTWILLFLLMGAWAGLTRA) is a signal peptide. Positions 29–32 (QGSK) are excised as a propeptide. The Peptidase S1 domain maps to 33–257 (ILEGQECKPH…YTNWIKKTMG (225 aa)). Disulfide bonds link C39–C173, C58–C74, C145–C246, C152–C218, C184–C198, and C208–C233. H73 functions as the Charge relay system in the catalytic mechanism. The N-linked (GlcNAc...) asparagine glycan is linked to N110. D120 acts as the Charge relay system in catalysis. Residue S212 is the Charge relay system of the active site.

The protein belongs to the peptidase S1 family. Kallikrein subfamily. Interacts with SPINK9. In terms of tissue distribution, restricted to hippocampus.

The protein localises to the secreted. Its subcellular location is the cytoplasm. It carries out the reaction Cleavage of amide substrates following the basic amino acids Arg or Lys at the P1 position, with a preference for Arg over Lys.. Serine protease which is capable of degrading a number of proteins such as casein, fibrinogen, kininogen, fibronectin and collagen type IV. Also cleaves L1CAM in response to increased neural activity. Induces neurite outgrowth and fasciculation of cultured hippocampal neurons. Plays a role in the formation and maturation of orphan and small synaptic boutons in the Schaffer-collateral pathway, regulates Schaffer-collateral long-term potentiation in the hippocampus and is required for memory acquisition and synaptic plasticity. Involved in skin desquamation and keratinocyte proliferation. Plays a role in the secondary phase of pathogenesis following spinal cord injury. In Rattus norvegicus (Rat), this protein is Kallikrein-8 (Klk8).